A 234-amino-acid polypeptide reads, in one-letter code: NAD-dependent protein deacylase (234 aa).

Residues 1-234 (MKNLVILSGA…IEMASQEMLK (234 aa)) enclose the Deacetylase sirtuin-type domain. NAD(+) is bound at residue 9-28 (GAGISAESGIKTFRDAGGLW). Substrate-binding residues include Tyr53 and Arg56. Residue 86–89 (QNVD) participates in NAD(+) binding. The Proton acceptor role is filled by His104. NAD(+)-binding positions include 169-171 (GTS) and Met217.

The protein belongs to the sirtuin family. Class III subfamily.

The protein localises to the cytoplasm. It carries out the reaction N(6)-acetyl-L-lysyl-[protein] + NAD(+) + H2O = 2''-O-acetyl-ADP-D-ribose + nicotinamide + L-lysyl-[protein]. The enzyme catalyses N(6)-succinyl-L-lysyl-[protein] + NAD(+) + H2O = 2''-O-succinyl-ADP-D-ribose + nicotinamide + L-lysyl-[protein]. NAD-dependent lysine deacetylase and desuccinylase that specifically removes acetyl and succinyl groups on target proteins. Modulates the activities of several proteins which are inactive in their acylated form. This is NAD-dependent protein deacylase from Helicobacter pylori (strain J99 / ATCC 700824) (Campylobacter pylori J99).